We begin with the raw amino-acid sequence, 244 residues long: Tetraspanin-1 (244 aa).

A run of 4 helical transmembrane segments spans residues 11–31, 67–87, 104–124, and 198–218; these read VLFFLDLAMLLAALALIAVGF, LIVVFWSIIGLSLGAVVTAVL, YLVLIIVLVSLEIGCGVAVLV, and ILLVILILQTIAIILPVPILI.

Belongs to the tetraspanin (TM4SF) family.

The protein resides in the membrane. This is Tetraspanin-1 (tsp-1) from Caenorhabditis elegans.